Consider the following 502-residue polypeptide: Maturase K (502 aa).

It belongs to the intron maturase 2 family. MatK subfamily.

The protein resides in the plastid. The protein localises to the chloroplast. Usually encoded in the trnK tRNA gene intron. Probably assists in splicing its own and other chloroplast group II introns. This chain is Maturase K, found in Arabis blepharophylla (Coast rock-cress).